We begin with the raw amino-acid sequence, 403 residues long: MHISRLALDHYRSWDHCVLDFEPGINILQGSNGLGKTNIVEAVEVLSTGSSHRTSSSLPLVEKGHPSATVRANVEDAGEQRTYEITIAARGANRARVDGGKSQYMRDIVGWVPSVSFTPEDQRLVSGDPATRRNFLNQAASLLLPRYAQSLQQFTHVAKQRAALLKQLSDGSGIDPEYGRQAVLSGLEVWTGQFIALGVQLTKDRNDVIGLLREPFTRIYASLAGEEEQADLVYEPSFDEVLLFDEPAAEISRHFQRIYPGEVARGQNLIGPQRDDLTLRLNDMPAREFASNGEMWTMALALKMALYEVVSAQRDVKPIVILDDVFAQLDESRRGQILDFARRQDQVLITVAAASDIPQGEAHVIDVAALRAQSQETDGDIAAMAAMLAAGRGAQSQGIEAES.

Position 30–37 (30–37) interacts with ATP; sequence GSNGLGKT.

The protein belongs to the RecF family.

It is found in the cytoplasm. In terms of biological role, the RecF protein is involved in DNA metabolism; it is required for DNA replication and normal SOS inducibility. RecF binds preferentially to single-stranded, linear DNA. It also seems to bind ATP. The protein is DNA replication and repair protein RecF of Bifidobacterium adolescentis (strain ATCC 15703 / DSM 20083 / NCTC 11814 / E194a).